The primary structure comprises 275 residues: Urease accessory protein UreD (275 aa).

The protein belongs to the UreD family. As to quaternary structure, ureD, UreF and UreG form a complex that acts as a GTP-hydrolysis-dependent molecular chaperone, activating the urease apoprotein by helping to assemble the nickel containing metallocenter of UreC. The UreE protein probably delivers the nickel.

The protein localises to the cytoplasm. Functionally, required for maturation of urease via the functional incorporation of the urease nickel metallocenter. This chain is Urease accessory protein UreD, found in Cereibacter sphaeroides (strain ATCC 17025 / ATH 2.4.3) (Rhodobacter sphaeroides).